A 436-amino-acid polypeptide reads, in one-letter code: 3-ketoacyl-CoA thiolase (436 aa).

The active-site Acyl-thioester intermediate is cysteine 99. Active-site proton acceptor residues include histidine 392 and cysteine 422.

The protein belongs to the thiolase-like superfamily. Thiolase family. As to quaternary structure, heterotetramer of two alpha chains (FadJ) and two beta chains (FadI).

It localises to the cytoplasm. It catalyses the reaction an acyl-CoA + acetyl-CoA = a 3-oxoacyl-CoA + CoA. It functions in the pathway lipid metabolism; fatty acid beta-oxidation. In terms of biological role, catalyzes the final step of fatty acid oxidation in which acetyl-CoA is released and the CoA ester of a fatty acid two carbons shorter is formed. The sequence is that of 3-ketoacyl-CoA thiolase from Shewanella sediminis (strain HAW-EB3).